An 82-amino-acid chain; its full sequence is Exodeoxyribonuclease 7 small subunit (82 aa).

This sequence belongs to the XseB family. As to quaternary structure, heterooligomer composed of large and small subunits.

The protein localises to the cytoplasm. It catalyses the reaction Exonucleolytic cleavage in either 5'- to 3'- or 3'- to 5'-direction to yield nucleoside 5'-phosphates.. Functionally, bidirectionally degrades single-stranded DNA into large acid-insoluble oligonucleotides, which are then degraded further into small acid-soluble oligonucleotides. The polypeptide is Exodeoxyribonuclease 7 small subunit (Sodalis glossinidius (strain morsitans)).